The following is a 343-amino-acid chain: Anthranilate 1,2-dioxygenase electron transfer component (343 aa).

The 2Fe-2S ferredoxin-type domain occupies 3–96; the sequence is HSVALNFADG…NAAFYFDHHS (94 aa). [2Fe-2S] cluster contacts are provided by cysteine 40, cysteine 45, cysteine 48, and cysteine 80. Residues 98-338 are ferredoxin-reductase; it reads ICNAGETLKI…HIYSEKFLQS (241 aa). Positions 103 to 206 constitute an FAD-binding FR-type domain; the sequence is ETLKIATVVT…EAPLGSFYLR (104 aa).

Belongs to the bacterial ring-hydroxylating dioxygenase ferredoxin reductase family. As to quaternary structure, monomer. It is part of the anthranilate dioxygenase two component enzyme system. The other component is an oxygenase component consisting of 3 large (AntA) and 3 small (AntB) subunits. FAD is required as a cofactor. The cofactor is [2Fe-2S] cluster.

The enzyme catalyses 2 reduced [2Fe-2S]-[ferredoxin] + NAD(+) + H(+) = 2 oxidized [2Fe-2S]-[ferredoxin] + NADH. It participates in aromatic compound metabolism; anthranilate degradation via hydroxylation; catechol from anthranilate: step 1/1. Functionally, electron transfer component of anthranilate 1,2-dioxygenase system. This chain is Anthranilate 1,2-dioxygenase electron transfer component, found in Acinetobacter baylyi (strain ATCC 33305 / BD413 / ADP1).